The following is a 374-amino-acid chain: 3-dehydroquinate synthase (374 aa).

The protein belongs to the archaeal-type DHQ synthase family.

The enzyme catalyses 2-amino-2,3,7-trideoxy-D-lyxo-hept-6-ulosonate + NAD(+) + H2O = 3-dehydroquinate + NH4(+) + NADH + H(+). In terms of biological role, catalyzes the oxidative deamination and cyclization of 2-amino-3,7-dideoxy-D-threo-hept-6-ulosonic acid (ADH) to yield 3-dehydroquinate (DHQ), which is fed into the canonical shikimic pathway of aromatic amino acid biosynthesis. The sequence is that of 3-dehydroquinate synthase from Methanothermobacter thermautotrophicus (strain ATCC 29096 / DSM 1053 / JCM 10044 / NBRC 100330 / Delta H) (Methanobacterium thermoautotrophicum).